Reading from the N-terminus, the 549-residue chain is uncharacterized protein (549 aa).

The next 12 helical transmembrane spans lie at 27 to 47 (ILRFAIPTFFFALFSAAYVFV), 108 to 128 (PIVVILNAITIFVPLGTGVIF), 146 to 166 (TGLVSTTLFALVTQIIVLAIA), 197 to 217 (AVAIGSEYVYILIGFNIIPML), 233 to 253 (FIAIVPPLSNLLNVLFVFLLV), 265 to 285 (VAAILVYFITFMAYVVYLISL), 308 to 328 (FLVISMVGLASFFRNGSLSIL), 352 to 372 (LVLLTGPIAIANLTSAAIFGV), 399 to 419 (TLLVCLVFAALLYLILAVGLG), 434 to 454 (LMLANQFSLIVQAQVFFVAIG), 472 to 492 (IVSLMQGVIVFVPLLFIFQAI), and 501 to 521 (IFIWLLTANAALAGLINVLIG).

The protein localises to the cell membrane. This is an uncharacterized protein from Mycoplasma pneumoniae (strain ATCC 29342 / M129 / Subtype 1) (Mycoplasmoides pneumoniae).